Consider the following 58-residue polypeptide: ATP synthase subunit a (58 aa).

The next 2 helical transmembrane spans lie at 11–31 (EIFY…LTGL) and 35–55 (VAIL…NDAI).

The protein belongs to the ATPase A chain family. F-type ATPases have 2 components, CF(1) - the catalytic core - and CF(0) - the membrane proton channel. CF(1) has five subunits: alpha(3), beta(3), gamma(1), delta(1), epsilon(1). CF(0) has three main subunits: a, b and c.

The protein localises to the mitochondrion inner membrane. Functionally, mitochondrial membrane ATP synthase (F(1)F(0) ATP synthase or Complex V) produces ATP from ADP in the presence of a proton gradient across the membrane which is generated by electron transport complexes of the respiratory chain. F-type ATPases consist of two structural domains, F(1) - containing the extramembraneous catalytic core and F(0) - containing the membrane proton channel, linked together by a central stalk and a peripheral stalk. During catalysis, ATP synthesis in the catalytic domain of F(1) is coupled via a rotary mechanism of the central stalk subunits to proton translocation. Key component of the proton channel; it may play a direct role in the translocation of protons across the membrane. This is ATP synthase subunit a (ATP6) from Brassica tournefortii (Wild turnip).